Consider the following 217-residue polypeptide: Biogenesis of lysosome-related organelles complex 1 subunit 4 (217 aa).

The tract at residues 1 to 57 (MEGSFSDGGALPEGLAEEAEPQGAAWSGDSGTVSQSHSSASGPWEDEGAEDGAPGRD) is disordered. Over residues 29–41 (DSGTVSQSHSSAS) the composition is skewed to polar residues. A coiled-coil region spans residues 136–165 (DRLEAFVRMVGGRVARMEEQVTKAEAELGT). Residue T165 is modified to Phosphothreonine.

This sequence belongs to the BLOC1S4 family. As to quaternary structure, interacts with BLOC1S5 and BLOC1S6. Component of the biogenesis of lysosome-related organelles complex 1 (BLOC-1) composed of BLOC1S1, BLOC1S2, BLOC1S3, BLOC1S4, BLOC1S5, BLOC1S6, DTNBP1/BLOC1S7 and SNAPIN/BLOC1S8. Octamer composed of one copy each BLOC1S1, BLOC1S2, BLOC1S3, BLOC1S4, BLOC1S5, BLOC1S6, DTNBP1/BLOC1S7 and SNAPIN/BLOC1S8. The BLOC-1 complex associates with the AP-3 protein complex and membrane protein cargos.

The protein localises to the cytoplasm. Its function is as follows. Component of the BLOC-1 complex, a complex that is required for normal biogenesis of lysosome-related organelles (LRO), such as platelet dense granules and melanosomes. In concert with the AP-3 complex, the BLOC-1 complex is required to target membrane protein cargos into vesicles assembled at cell bodies for delivery into neurites and nerve terminals. The BLOC-1 complex, in association with SNARE proteins, is also proposed to be involved in neurite extension. Plays a role in intracellular vesicle trafficking. The protein is Biogenesis of lysosome-related organelles complex 1 subunit 4 (BLOC1S4) of Homo sapiens (Human).